The chain runs to 103 residues: Protein translation factor SUI1 homolog (103 aa).

It belongs to the SUI1 family.

The chain is Protein translation factor SUI1 homolog from Hyperthermus butylicus (strain DSM 5456 / JCM 9403 / PLM1-5).